The following is a 154-amino-acid chain: Ribosome maturation factor RimP (154 aa).

Belongs to the RimP family.

The protein localises to the cytoplasm. Required for maturation of 30S ribosomal subunits. The polypeptide is Ribosome maturation factor RimP (Flavobacterium psychrophilum (strain ATCC 49511 / DSM 21280 / CIP 103535 / JIP02/86)).